A 483-amino-acid polypeptide reads, in one-letter code: MLTLDTLNVMLAVSEEGLIEEMIIALLASPQLAVFFEKFPRLKAAITDDVPRWREALRSRLKDARVPPELTEEVMCYQQSQLLSTPQFIVQLPQILDLLHRLNSPWAEQARQLVDANSTITSALHTLFLQRWRLSLIVQATTLNQQLLEEEREQLLSEVQERMTQSGQLEPILADNNTAAGRLWDMSAGQLKRGDYQLIVKYGEFLNEQPELKRLAEQLGRSREAKSIPRNDAQMETFRTLVREPATVPEQVDGLQQSDDILRLLPPELATLGITELEYEFYRRLVEKQLLTYRLHGESWREKVIERPVVHKDYDEQPRGPFIVCVDTSGSMGGFNEQCAKAFCLALMRIALAENRRCYIMLFSTEIVRYELSGPQGIEQAIRFLSQRFRGGTDLASCFRAIMERLQSREWFDADAVVISDFIAQRLPDDVTSKVKELQRVHQHRFHAVAMSAHGKPGIMRIFDHIWRFDTGMRSRLLRRWRR.

This sequence belongs to the ViaA family. In terms of assembly, homodimer. Interacts with RavA.

It localises to the cytoplasm. Component of the RavA-ViaA chaperone complex, which may act on the membrane to optimize the function of some of the respiratory chains. ViaA stimulates the ATPase activity of RavA. The sequence is that of Regulatory protein ViaA from Escherichia coli (strain SMS-3-5 / SECEC).